We begin with the raw amino-acid sequence, 468 residues long: Glutamine synthetase (468 aa).

In terms of domain architecture, GS beta-grasp spans 13–97 (NEVKFVDLRF…IRCDILEPAT (85 aa)). Residues 105-468 (PRSIAKRAED…PVEFELYYSV (364 aa)) form the GS catalytic domain. The Mg(2+) site is built by Glu-130 and Glu-132. An ATP-binding site is contributed by Glu-208. The Mg(2+) site is built by Glu-213 and Glu-220. L-glutamate contacts are provided by residues 264–265 (NG) and Gly-265. His-269 contacts Mg(2+). ATP is bound by residues 271–273 (HQS) and Ser-273. 3 residues coordinate L-glutamate: Arg-321, Glu-327, and Arg-339. Residues Arg-339, Arg-344, and Lys-352 each coordinate ATP. Glu-357 is a Mg(2+) binding site. Arg-359 is a binding site for L-glutamate. At Tyr-397 the chain carries O-AMP-tyrosine.

This sequence belongs to the glutamine synthetase family. As to quaternary structure, oligomer of 12 subunits arranged in the form of two hexameric ring. Mg(2+) is required as a cofactor.

The protein localises to the cytoplasm. It catalyses the reaction L-glutamate + NH4(+) + ATP = L-glutamine + ADP + phosphate + H(+). Its activity is regulated as follows. The activity of this enzyme could be controlled by adenylation under conditions of abundant glutamine. Functionally, catalyzes the ATP-dependent biosynthesis of glutamine from glutamate and ammonia. This is Glutamine synthetase from Vibrio alginolyticus.